The chain runs to 438 residues: GTPase Obg (438 aa).

An Obg domain is found at 1 to 159 (MAFRDVLNIE…RRVRLELRLI (159 aa)). The OBG-type G domain occupies 160–332 (ADVGLVGYPN…LRETLFQLLP (173 aa)). ATP is bound by residues 166-173 (GYPNAGKS), 191-195 (FTTLS), 219-222 (DIPG), 285-288 (NKVE), and 313-315 (SAK). Ser173 and Thr193 together coordinate Mg(2+). The OCT domain maps to 357–435 (IVFREDAPAK…IGTFRFEYFD (79 aa)).

This sequence belongs to the TRAFAC class OBG-HflX-like GTPase superfamily. OBG GTPase family. Monomer. Mg(2+) serves as cofactor.

It localises to the cytoplasm. An essential GTPase which binds GTP, GDP and possibly (p)ppGpp with moderate affinity, with high nucleotide exchange rates and a fairly low GTP hydrolysis rate. Plays a role in control of the cell cycle, stress response, ribosome biogenesis and in those bacteria that undergo differentiation, in morphogenesis control. This is GTPase Obg from Deinococcus radiodurans (strain ATCC 13939 / DSM 20539 / JCM 16871 / CCUG 27074 / LMG 4051 / NBRC 15346 / NCIMB 9279 / VKM B-1422 / R1).